We begin with the raw amino-acid sequence, 665 residues long: Kinesin-like protein KIF22 (665 aa).

The Kinesin motor domain maps to 43-368 (RVRVAVRLRP…LNFAARSKEV (326 aa)). 127–134 (GPTGAGKT) contacts ATP. The segment at 379–428 (QPHALGPVKLSQKELLGPPEAKRARGPEEEEIGSPEPMAAPASASQKLSP) is disordered. Ser412, Ser427, and Ser452 each carry phosphoserine. Positions 412–428 (SPEPMAAPASASQKLSP) are enriched in low complexity. A Glycyl lysine isopeptide (Lys-Gly) (interchain with G-Cter in SUMO2) cross-link involves residue Lys465. Residues 465-508 (KRERMVLMKTVEEKDLEIERLKTKQKELEAKMLAQKAEEKENHC) adopt a coiled-coil conformation. A phosphoserine mark is found at Ser543, Ser562, and Ser581.

It belongs to the TRAFAC class myosin-kinesin ATPase superfamily. Kinesin family. In terms of assembly, interacts with FAM83D. Interacts with SIAH1. Ubiquitinated; mediated by SIAH1 and leading to its subsequent proteasomal degradation. In terms of tissue distribution, expressed in bone, cartilage, joint capsule, ligament, skin, and primary cultured chondrocytes.

Its subcellular location is the nucleus. It localises to the cytoplasm. It is found in the cytoskeleton. Kinesin family member that is involved in spindle formation and the movements of chromosomes during mitosis and meiosis. Binds to microtubules and to DNA. Plays a role in congression of laterally attached chromosomes in NDC80-depleted cells. This Homo sapiens (Human) protein is Kinesin-like protein KIF22 (KIF22).